We begin with the raw amino-acid sequence, 418 residues long: Acyl-[acyl-carrier-protein] desaturase 4, chloroplastic (418 aa).

The N-terminal 70 residues, M1–A70, are a transit peptide targeting the chloroplast. The Fe cation site is built by E152, E190, H193, E243, E276, and H279.

This sequence belongs to the fatty acid desaturase type 2 family. As to quaternary structure, homodimer. It depends on Fe(2+) as a cofactor.

Its subcellular location is the plastid. The protein localises to the chloroplast. The protein operates within lipid metabolism; fatty acid metabolism. In terms of biological role, introduces a cis double bond in the acyl chain of an acyl-[acyl-carrier protein]. In Oryza sativa subsp. japonica (Rice), this protein is Acyl-[acyl-carrier-protein] desaturase 4, chloroplastic.